The following is a 1046-amino-acid chain: DNA-directed RNA polymerase subunit beta' (1046 aa).

The Mg(2+) site is built by D383, D385, and D387. Positions 752, 826, 833, and 836 each coordinate Zn(2+).

This sequence belongs to the RNA polymerase beta' chain family. As to quaternary structure, the RNAP catalytic core consists of 2 alpha, 1 beta, 1 beta' and 1 omega subunit. When a sigma factor is associated with the core the holoenzyme is formed, which can initiate transcription. The cofactor is Mg(2+). Zn(2+) serves as cofactor.

It carries out the reaction RNA(n) + a ribonucleoside 5'-triphosphate = RNA(n+1) + diphosphate. Its function is as follows. DNA-dependent RNA polymerase catalyzes the transcription of DNA into RNA using the four ribonucleoside triphosphates as substrates. The sequence is that of DNA-directed RNA polymerase subunit beta' from Weissella hellenica.